The primary structure comprises 215 residues: Adenylate kinase (215 aa).

10–15 (GAGKGT) contributes to the ATP binding site. Positions 30-59 (STGDILRANVREGTELGLAAKEYMDKGELV) are NMP. AMP is bound by residues Thr31, Arg36, 57–59 (ELV), 85–88 (GYPR), and Gln92. The interval 126–162 (GRLMCNCGASYHRTFNPPKKDDVCDICGGKVFQRADD) is LID. Arg127 contacts ATP. Zn(2+) is bound by residues Cys130 and Cys132. ATP is bound at residue 135-136 (SY). The Zn(2+) site is built by Cys149 and Cys152. AMP-binding residues include Arg159 and Arg170. Lys198 provides a ligand contact to ATP.

This sequence belongs to the adenylate kinase family. Monomer.

It localises to the cytoplasm. The catalysed reaction is AMP + ATP = 2 ADP. It functions in the pathway purine metabolism; AMP biosynthesis via salvage pathway; AMP from ADP: step 1/1. Functionally, catalyzes the reversible transfer of the terminal phosphate group between ATP and AMP. Plays an important role in cellular energy homeostasis and in adenine nucleotide metabolism. The sequence is that of Adenylate kinase from Methanosarcina barkeri (strain Fusaro / DSM 804).